The primary structure comprises 923 residues: Lysosomal acid alpha-glucosidase (923 aa).

Positions 1-17 (MKHQVLLPLLVTTAIIA) are cleaved as a signal peptide. The propeptide occupies 18 to 36 (GSVGVYTHSKPLLGQSQDQ). Residues asparagine 65, asparagine 405, and asparagine 440 are each glycosylated (N-linked (GlcNAc...) asparagine). Aspartate 455 (nucleophile) is an active-site residue. Glutamate 458 is an active-site residue. Aspartate 585 acts as the Proton donor in catalysis. Asparagine 586, asparagine 621, asparagine 646, asparagine 848, asparagine 908, and asparagine 912 each carry an N-linked (GlcNAc...) asparagine glycan.

The protein belongs to the glycosyl hydrolase 31 family.

Its subcellular location is the lysosome. It is found in the secreted. It catalyses the reaction Hydrolysis of terminal, non-reducing (1-&gt;4)-linked alpha-D-glucose residues with release of alpha-D-glucose.. Its function is as follows. Essential for the degradation of glycogen to glucose in lysosomes. Has both alpha-1,4 and alpha-1,6-glucosidase activity. The polypeptide is Lysosomal acid alpha-glucosidase (Tetrahymena pyriformis).